Reading from the N-terminus, the 78-residue chain is Acyl carrier protein (78 aa).

In terms of domain architecture, Carrier spans 1 to 75 (MIKEKILSIV…DLISVVKNST (75 aa)). An O-(pantetheine 4'-phosphoryl)serine modification is found at S35.

It belongs to the acyl carrier protein (ACP) family. Post-translationally, 4'-phosphopantetheine is transferred from CoA to a specific serine of apo-ACP by AcpS. This modification is essential for activity because fatty acids are bound in thioester linkage to the sulfhydryl of the prosthetic group.

It localises to the cytoplasm. It functions in the pathway lipid metabolism; fatty acid biosynthesis. Functionally, carrier of the growing fatty acid chain in fatty acid biosynthesis. The sequence is that of Acyl carrier protein (acpP) from Shigella flexneri.